We begin with the raw amino-acid sequence, 360 residues long: Uptake hydrogenase small subunit (360 aa).

Positions Met-1–Leu-46 form a signal peptide, tat-type signal. Cys-62, Cys-65, Cys-160, Cys-194, His-232, Cys-235, Cys-260, and Cys-266 together coordinate [4Fe-4S] cluster. [3Fe-4S] cluster-binding residues include Cys-275, Cys-294, and Cys-297.

Belongs to the [NiFe]/[NiFeSe] hydrogenase small subunit family. Heterodimer of a large and a small subunit. [4Fe-4S] cluster serves as cofactor. The cofactor is [3Fe-4S] cluster. Post-translationally, predicted to be exported by the Tat system. The position of the signal peptide cleavage has not been experimentally proven.

The protein resides in the cell membrane. It carries out the reaction H2 + A = AH2. Functionally, this enzyme recycles the H(2) produced by nitrogenase to increase the production of ATP and to protect nitrogenase against inhibition or damage by O(2) under carbon- or phosphate-limited conditions. The protein is Uptake hydrogenase small subunit (hupA) of Rhizobium leguminosarum bv. viciae.